The following is a 425-amino-acid chain: SWI/SNF and RSC complexes subunit ssr3 (425 aa).

Residues 1-16 (MSNNSRLPENGVQSGN) are compositionally biased toward polar residues. The tract at residues 1-23 (MSNNSRLPENGVQSGNGEDAELK) is disordered. The SWIB/MDM2 domain maps to 201-278 (EHPERYKLSK…PELMNRFLEP (78 aa)).

It belongs to the SMARCD family. Component of the RSC complex composed of at least arp9, arp42, rsc1, rsc4, rsc7, rsc9, rsc58, sfh1, snf21, ssr1, ssr2, ssr3 and ssr4. The complex interacts with histone and histone variant components of centromeric chromatin. Component of the SWI/SNF global transcription activator complex composed of at least arp9, arp42, snf5, snf22, snf30, sbf59, sol1, ssr1, ssr2, ssr3, ssr4 and tfg3.

The protein localises to the cytoplasm. It localises to the nucleus. In terms of biological role, component of the chromatin structure remodeling complex (RSC), which is involved in transcription regulation and nucleosome positioning. Controls particularly membrane and organelle development genes. Part of the SWI/SNF complex, an ATP-dependent chromatin remodeling complex, required for the positive and negative regulation of gene expression of a large number of genes. It changes chromatin structure by altering DNA-histone contacts within a nucleosome, leading eventually to a change in nucleosome position, thus facilitating or repressing binding of gene-specific transcription factors. This Schizosaccharomyces pombe (strain 972 / ATCC 24843) (Fission yeast) protein is SWI/SNF and RSC complexes subunit ssr3 (ssr3).